Reading from the N-terminus, the 414-residue chain is Proton/glutamate-aspartate symporter (414 aa).

The Cytoplasmic segment spans residues 1 to 3 (MKK). Residues 4–24 (LIAFQILIALAVGAVIGHFFP) traverse the membrane as a helical segment. Residues 25–42 (DFGMALRPVGDGFIRLIK) lie on the Extracellular side of the membrane. Residues 43 to 63 (MIVVPIVFSTIVIGAAGSGSM) form a helical membrane-spanning segment. Over 64–73 (KKMGSLGIKT) the chain is Cytoplasmic. The helical transmembrane segment at 74–94 (IIWFEVITTLVLGLGLLLANV) threads the bilayer. The Extracellular segment spans residues 95–144 (LKPGVGLDLSHLAKKDIHELSGYTDKVVDFKQMILDIIPTNIIDVMARND). A helical transmembrane segment spans residues 145–165 (LLAVIFFAILFGVAAAGIGKA). Residues 166-182 (SEPVMKFFESTAQIMFK) lie on the Cytoplasmic side of the membrane. Residues 183 to 203 (LTQIVMVTAPIGVLALMAASV) form a helical membrane-spanning segment. Topologically, residues 204 to 219 (GQYGIELLLPMFKLVG) are extracellular. The chain crosses the membrane as a helical span at residues 220-240 (TVFLGLFLILFVLFPLVGLIF). Position 241 (Q241) is a topological domain, cytoplasmic. The helical transmembrane segment at 242–262 (IKYFEVLKMIWDLFLIAFSTT) threads the bilayer. At 263-300 (STETILPQLMDRMEKYGCPKRVVSFVVPSGLSLNCDGS) the chain is on the extracellular side. A helical membrane pass occupies residues 301–321 (SLYLSVSCIFLAQAFQVDMTL). At 322 to 324 (SQQ) the chain is on the cytoplasmic side. The next 2 membrane-spanning stretches (helical) occupy residues 325 to 345 (LLMM…PSGS) and 346 to 366 (LVVL…VAII). Residues 367-414 (AGVDRVMDMARTGVNVPGHAIACIVVSKWEKAFRQKEWVSANSQTESI) are Cytoplasmic-facing.

The protein belongs to the dicarboxylate/amino acid:cation symporter (DAACS) (TC 2.A.23) family.

The protein resides in the cell membrane. Its activity is regulated as follows. Glutamate uptake is inhibited by beta-hydroxyaspartate and cysteic acid. Its function is as follows. Catalyzes the proton-dependent, binding-protein-independent transport of glutamate and aspartate. In Bacillus subtilis (strain 168), this protein is Proton/glutamate-aspartate symporter.